The sequence spans 293 residues: 4-hydroxybenzoate octaprenyltransferase (293 aa).

Transmembrane regions (helical) follow at residues 26–48 (PIGT…GGMP), 98–118 (TEAK…DLLL), 122–142 (TFLL…MKRF), 145–165 (LPQV…YGAV), 167–187 (ESLP…TVAY), 218–238 (IIAL…WISQ), 241–261 (WGYF…CWLT), and 272–292 (AFLN…VGIY).

It belongs to the UbiA prenyltransferase family. It depends on Mg(2+) as a cofactor.

It is found in the cell inner membrane. It catalyses the reaction all-trans-octaprenyl diphosphate + 4-hydroxybenzoate = 4-hydroxy-3-(all-trans-octaprenyl)benzoate + diphosphate. The protein operates within cofactor biosynthesis; ubiquinone biosynthesis. Catalyzes the prenylation of para-hydroxybenzoate (PHB) with an all-trans polyprenyl group. Mediates the second step in the final reaction sequence of ubiquinone-8 (UQ-8) biosynthesis, which is the condensation of the polyisoprenoid side chain with PHB, generating the first membrane-bound Q intermediate 3-octaprenyl-4-hydroxybenzoate. The polypeptide is 4-hydroxybenzoate octaprenyltransferase (Actinobacillus pleuropneumoniae serotype 3 (strain JL03)).